The primary structure comprises 485 residues: Adenylate kinase 8 (485 aa).

Adenylate kinase stretches follow at residues Pro-58–Leu-258 and Pro-269–Ser-472. Residue Ala-67–Thr-72 coordinates ATP. Positions Thr-87 to Val-113 are NMP 1. AMP-binding positions include Gly-140–Lys-143 and Gln-147. Residues Gly-177–Glu-206 form an LID 1 region. Arg-218 contributes to the AMP binding site. Gly-278–Leu-283 contributes to the ATP binding site. The tract at residues Cys-298–Val-327 is NMP 2. Residues Gln-325 to Val-327, Gly-354 to Arg-357, and Gln-361 each bind AMP. Residues Leu-391–His-424 are LID 2. Arg-432 contributes to the AMP binding site.

It belongs to the adenylate kinase family.

Its subcellular location is the cytoplasm. The protein resides in the cytosol. The catalysed reaction is AMP + ATP = 2 ADP. It carries out the reaction a 2'-deoxyribonucleoside 5'-diphosphate + ATP = a 2'-deoxyribonucleoside 5'-triphosphate + ADP. The enzyme catalyses a ribonucleoside 5'-diphosphate + ATP = a ribonucleoside 5'-triphosphate + ADP. Functionally, nucleoside monophosphate (NMP) kinase that catalyzes the reversible transfer of the terminal phosphate group between nucleoside triphosphates and monophosphates. Has highest activity toward AMP, and weaker activity toward dAMP, CMP and dCMP. Also displays broad nucleoside diphosphate kinase activity. This chain is Adenylate kinase 8 (ak8), found in Xenopus tropicalis (Western clawed frog).